The sequence spans 181 residues: Adenine phosphoribosyltransferase (181 aa).

This sequence belongs to the purine/pyrimidine phosphoribosyltransferase family. Homodimer.

It localises to the cytoplasm. The enzyme catalyses AMP + diphosphate = 5-phospho-alpha-D-ribose 1-diphosphate + adenine. It participates in purine metabolism; AMP biosynthesis via salvage pathway; AMP from adenine: step 1/1. Its function is as follows. Catalyzes a salvage reaction resulting in the formation of AMP, that is energically less costly than de novo synthesis. The protein is Adenine phosphoribosyltransferase of Vibrio vulnificus (strain CMCP6).